Reading from the N-terminus, the 393-residue chain is Histidinol dehydrogenase (393 aa).

Residues tyrosine 112, glutamine 171, and asparagine 194 each coordinate NAD(+). Residues threonine 217, glutamine 239, and histidine 242 each contribute to the substrate site. Residues glutamine 239 and histidine 242 each coordinate Zn(2+). Residues glutamate 293 and histidine 294 each act as proton acceptor in the active site. Residues histidine 294, aspartate 326, glutamate 379, and histidine 384 each coordinate substrate. Aspartate 326 is a Zn(2+) binding site. Histidine 384 is a binding site for Zn(2+).

Belongs to the histidinol dehydrogenase family. The cofactor is Zn(2+).

The catalysed reaction is L-histidinol + 2 NAD(+) + H2O = L-histidine + 2 NADH + 3 H(+). The protein operates within amino-acid biosynthesis; L-histidine biosynthesis; L-histidine from 5-phospho-alpha-D-ribose 1-diphosphate: step 9/9. Its function is as follows. Catalyzes the sequential NAD-dependent oxidations of L-histidinol to L-histidinaldehyde and then to L-histidine. The chain is Histidinol dehydrogenase from Sulfolobus acidocaldarius (strain ATCC 33909 / DSM 639 / JCM 8929 / NBRC 15157 / NCIMB 11770).